A 322-amino-acid polypeptide reads, in one-letter code: uncharacterized protein (322 aa).

Positions 205–286 form a coiled coil; the sequence is QEIKNAHAAL…LKKAISEAVQ (82 aa). Composition is skewed to basic and acidic residues over residues 254–281 and 290–299; these read EKEEELNKKDKEKEEETEKEGEKLKKAI and DRIEAIEKSR. Residues 254–322 form a disordered region; it reads EKEEELNKKD…VQKSIWSGLF (69 aa). Positions 310–322 are enriched in polar residues; sequence SEQVQKSIWSGLF.

This sequence to B.subtilis XkdF.

This is an uncharacterized protein from Bacillus subtilis (strain 168).